A 299-amino-acid chain; its full sequence is ATP phosphoribosyltransferase (299 aa).

The protein belongs to the ATP phosphoribosyltransferase family. Long subfamily. As to quaternary structure, equilibrium between an active dimeric form, an inactive hexameric form and higher aggregates. Interconversion between the various forms is largely reversible and is influenced by the natural substrates and inhibitors of the enzyme. The cofactor is Mg(2+).

Its subcellular location is the cytoplasm. The enzyme catalyses 1-(5-phospho-beta-D-ribosyl)-ATP + diphosphate = 5-phospho-alpha-D-ribose 1-diphosphate + ATP. Its pathway is amino-acid biosynthesis; L-histidine biosynthesis; L-histidine from 5-phospho-alpha-D-ribose 1-diphosphate: step 1/9. Its activity is regulated as follows. Feedback inhibited by histidine. Catalyzes the condensation of ATP and 5-phosphoribose 1-diphosphate to form N'-(5'-phosphoribosyl)-ATP (PR-ATP). Has a crucial role in the pathway because the rate of histidine biosynthesis seems to be controlled primarily by regulation of HisG enzymatic activity. The sequence is that of ATP phosphoribosyltransferase from Klebsiella pneumoniae (strain 342).